The chain runs to 114 residues: ATP synthase epsilon chain (114 aa).

It belongs to the ATPase epsilon chain family. In terms of assembly, F-type ATPases have 2 components, CF(1) - the catalytic core - and CF(0) - the membrane proton channel. CF(1) has five subunits: alpha(3), beta(3), gamma(1), delta(1), epsilon(1). CF(0) has three main subunits: a, b and c.

Its subcellular location is the cell membrane. In terms of biological role, produces ATP from ADP in the presence of a proton gradient across the membrane. This Wolbachia pipientis wMel protein is ATP synthase epsilon chain.